The following is a 335-amino-acid chain: Ornithine carbamoyltransferase 2, catabolic (335 aa).

Carbamoyl phosphate contacts are provided by residues 62 to 65 (STRT), Gln89, Arg113, and 140 to 143 (HPTQ). Residues Asn172, Asp236, and 240–241 (SM) contribute to the L-ornithine site. Residues 277-278 (CL) and Arg322 contribute to the carbamoyl phosphate site.

The protein belongs to the aspartate/ornithine carbamoyltransferase superfamily. OTCase family.

The protein resides in the cytoplasm. The catalysed reaction is carbamoyl phosphate + L-ornithine = L-citrulline + phosphate + H(+). The protein operates within amino-acid degradation; L-arginine degradation via ADI pathway; carbamoyl phosphate from L-arginine: step 2/2. Functionally, reversibly catalyzes the transfer of the carbamoyl group from carbamoyl phosphate (CP) to the N(epsilon) atom of ornithine (ORN) to produce L-citrulline. This Staphylococcus epidermidis (strain ATCC 12228 / FDA PCI 1200) protein is Ornithine carbamoyltransferase 2, catabolic (arcB2).